Reading from the N-terminus, the 128-residue chain is Protein SOB FIVE-LIKE 3 (128 aa).

Disordered stretches follow at residues 1-26 (MERE…EEEE) and 54-128 (KDSD…HKKK). Residues 8 to 18 (SSESGWTTYIS) are compositionally biased toward polar residues. The SOFL-A motif lies at 11–16 (SGWTTY). The SOFL-B signature appears at 59–68 (SMASDASSGP). Over residues 80-104 (REGLALRNGKGESNDVYSHRIDDKN) the composition is skewed to basic and acidic residues. Residues 111-118 (RKKEKKKS) carry the Nuclear localization signal motif.

This sequence belongs to the SOFL plant protein family. As to expression, expressed in seedlings, roots, flowers and siliques.

The protein localises to the cytoplasm. The protein resides in the nucleus. In terms of biological role, involved in cytokinin-mediated development. This is Protein SOB FIVE-LIKE 3 from Arabidopsis thaliana (Mouse-ear cress).